The chain runs to 166 residues: UPF0179 protein Tneu_1978 (166 aa).

Residues 140–166 form a disordered region; that stretch reads PPSPSKSGGATASRDPSRAPPSRPLSK. A compositionally biased stretch (pro residues) spans 157-166; the sequence is RAPPSRPLSK.

This sequence belongs to the UPF0179 family.

This chain is UPF0179 protein Tneu_1978, found in Pyrobaculum neutrophilum (strain DSM 2338 / JCM 9278 / NBRC 100436 / V24Sta) (Thermoproteus neutrophilus).